A 43-amino-acid chain; its full sequence is Potassium channel toxin gamma-KTx 4.2 (43 aa).

Intrachain disulfides connect Cys-5–Cys-23, Cys-11–Cys-34, Cys-20–Cys-39, and Cys-24–Cys-41.

It belongs to the ergtoxin family. Gamma-KTx 4 subfamily. In terms of tissue distribution, expressed by the venom gland.

It is found in the secreted. Reversibly blocks Kv11/ERG potassium channels. In Centruroides noxius (Mexican scorpion), this protein is Potassium channel toxin gamma-KTx 4.2.